Consider the following 140-residue polypeptide: Transcription antitermination protein NusB (140 aa).

It belongs to the NusB family.

Its function is as follows. Involved in transcription antitermination. Required for transcription of ribosomal RNA (rRNA) genes. Binds specifically to the boxA antiterminator sequence of the ribosomal RNA (rrn) operons. In Pseudothermotoga lettingae (strain ATCC BAA-301 / DSM 14385 / NBRC 107922 / TMO) (Thermotoga lettingae), this protein is Transcription antitermination protein NusB.